We begin with the raw amino-acid sequence, 495 residues long: UDP-N-acetylmuramoyl-L-alanyl-D-glutamate--2,6-diaminopimelate ligase (495 aa).

UDP-N-acetyl-alpha-D-muramoyl-L-alanyl-D-glutamate is bound by residues leucine 27, serine 29, and 44-46 (HQA). 116-122 (GTNGKTT) contacts ATP. UDP-N-acetyl-alpha-D-muramoyl-L-alanyl-D-glutamate is bound by residues asparagine 157, 158–159 (TT), serine 185, glutamine 191, and arginine 193. At lysine 225 the chain carries N6-carboxylysine. Meso-2,6-diaminopimelate contacts are provided by residues arginine 390, 414–417 (DNPR), glycine 465, and glutamate 469. The short motif at 414-417 (DNPR) is the Meso-diaminopimelate recognition motif element.

Belongs to the MurCDEF family. MurE subfamily. Mg(2+) serves as cofactor. In terms of processing, carboxylation is probably crucial for Mg(2+) binding and, consequently, for the gamma-phosphate positioning of ATP.

The protein resides in the cytoplasm. The catalysed reaction is UDP-N-acetyl-alpha-D-muramoyl-L-alanyl-D-glutamate + meso-2,6-diaminopimelate + ATP = UDP-N-acetyl-alpha-D-muramoyl-L-alanyl-gamma-D-glutamyl-meso-2,6-diaminopimelate + ADP + phosphate + H(+). The protein operates within cell wall biogenesis; peptidoglycan biosynthesis. Functionally, catalyzes the addition of meso-diaminopimelic acid to the nucleotide precursor UDP-N-acetylmuramoyl-L-alanyl-D-glutamate (UMAG) in the biosynthesis of bacterial cell-wall peptidoglycan. The chain is UDP-N-acetylmuramoyl-L-alanyl-D-glutamate--2,6-diaminopimelate ligase from Salmonella paratyphi A (strain ATCC 9150 / SARB42).